The primary structure comprises 52 residues: Large ribosomal subunit protein bL32c (52 aa).

Belongs to the bacterial ribosomal protein bL32 family.

It localises to the plastid. Its subcellular location is the chloroplast. The protein is Large ribosomal subunit protein bL32c of Aethionema grandiflorum (Persian stone-cress).